Reading from the N-terminus, the 204-residue chain is MTEQKVVIIDTGCANVSSVKFAIERLGYDVTISKDPQVVLSADKLFLPGVGTASEAMKNLEERDLISLVKQVEKPLLGICLGMQLLGKVSQEKGQKADELVECLGLCDGEVKLLQTGDLPLPHMGWNTVSAKAGNPLFKGIEEGEYFYFVHSFAMPVGDYTIAECEYGNSFTAAVQSGNYYGVQFHPERSSKAGAKLIQNFLEL.

Residues 5–204 (KVVIIDTGCA…AKLIQNFLEL (200 aa)) enclose the Glutamine amidotransferase type-1 domain. C80 serves as the catalytic Nucleophile. Residues H186 and E188 contribute to the active site.

In terms of assembly, heterodimer of HisH and HisF.

It localises to the cytoplasm. The catalysed reaction is 5-[(5-phospho-1-deoxy-D-ribulos-1-ylimino)methylamino]-1-(5-phospho-beta-D-ribosyl)imidazole-4-carboxamide + L-glutamine = D-erythro-1-(imidazol-4-yl)glycerol 3-phosphate + 5-amino-1-(5-phospho-beta-D-ribosyl)imidazole-4-carboxamide + L-glutamate + H(+). It catalyses the reaction L-glutamine + H2O = L-glutamate + NH4(+). Its pathway is amino-acid biosynthesis; L-histidine biosynthesis; L-histidine from 5-phospho-alpha-D-ribose 1-diphosphate: step 5/9. Its function is as follows. IGPS catalyzes the conversion of PRFAR and glutamine to IGP, AICAR and glutamate. The HisH subunit provides the glutamine amidotransferase activity that produces the ammonia necessary to HisF for the synthesis of IGP and AICAR. The sequence is that of Imidazole glycerol phosphate synthase subunit HisH 1 (hisH1) from Vibrio vulnificus (strain YJ016).